Consider the following 858-residue polypeptide: Gamma-secretase-activating protein (858 aa).

This sequence belongs to the GSAP family. In terms of assembly, interacts with APP; specifically interacts with the CTF-alpha product of APP. Interacts with the gamma-secretase complex. In terms of processing, the protein is first synthesized as a holoprotein form of 98 kDa and rapidly processed into the gamma-secretase-activating protein 16 kDa C-terminal form, which constitutes the predominant form.

Its subcellular location is the golgi apparatus. The protein resides in the trans-Golgi network. Its function is as follows. Regulator of gamma-secretase activity, which specifically activates the production of amyloid-beta protein (amyloid-beta protein 40 and amyloid-beta protein 42), without affecting the cleavage of other gamma-secretase targets such has Notch. The gamma-secretase complex is an endoprotease complex that catalyzes the intramembrane cleavage of integral membrane proteins such as Notch receptors and APP (amyloid-beta precursor protein). Specifically promotes the gamma-cleavage of APP CTF-alpha (also named APP-CTF) by the gamma-secretase complex to generate amyloid-beta, while it reduces the epsilon-cleavage of APP CTF-alpha, leading to a low production of AICD. The sequence is that of Gamma-secretase-activating protein (Gsap) from Mus musculus (Mouse).